The sequence spans 354 residues: UPF0496 protein At4g34330 (354 aa).

2 helical membrane-spanning segments follow: residues 200-220 and 222-242; these read IIFM…ATMA and PHVA…GKWI. A coiled-coil region spans residues 270 to 341; that stretch reads AVQDLNNIKD…CSTDIRRART (72 aa).

Belongs to the UPF0496 family.

It localises to the membrane. The chain is UPF0496 protein At4g34330 from Arabidopsis thaliana (Mouse-ear cress).